The sequence spans 305 residues: GMP synthase [glutamine-hydrolyzing] subunit B (305 aa).

Residues 2–184 form the GMPS ATP-PPase domain; sequence VKPEKFIPKA…LQLPEEICER (183 aa). 29–35 lines the ATP pocket; the sequence is SGGVDSS.

Heterodimer composed of a glutamine amidotransferase subunit (A) and a GMP-binding subunit (B).

The catalysed reaction is XMP + L-glutamine + ATP + H2O = GMP + L-glutamate + AMP + diphosphate + 2 H(+). The protein operates within purine metabolism; GMP biosynthesis; GMP from XMP (L-Gln route): step 1/1. Catalyzes the synthesis of GMP from XMP. This Methanosarcina acetivorans (strain ATCC 35395 / DSM 2834 / JCM 12185 / C2A) protein is GMP synthase [glutamine-hydrolyzing] subunit B (guaAB).